A 446-amino-acid polypeptide reads, in one-letter code: Adenylosuccinate synthetase (446 aa).

GTP is bound by residues 20 to 26 (GDEGKGK) and 48 to 50 (GHT). The active-site Proton acceptor is the D21. The Mg(2+) site is built by D21 and G48. IMP is bound by residues 21-24 (DEGK), 46-49 (NAGH), T137, R151, Q232, T247, and R319. H49 functions as the Proton donor in the catalytic mechanism. 315 to 321 (SVTGRPR) is a substrate binding site. Residues R321, 347-349 (KLD), and 429-431 (STG) each bind GTP.

The protein belongs to the adenylosuccinate synthetase family. As to quaternary structure, homodimer. Mg(2+) is required as a cofactor.

It is found in the cytoplasm. It catalyses the reaction IMP + L-aspartate + GTP = N(6)-(1,2-dicarboxyethyl)-AMP + GDP + phosphate + 2 H(+). It participates in purine metabolism; AMP biosynthesis via de novo pathway; AMP from IMP: step 1/2. Its function is as follows. Plays an important role in the de novo pathway of purine nucleotide biosynthesis. Catalyzes the first committed step in the biosynthesis of AMP from IMP. The chain is Adenylosuccinate synthetase from Polynucleobacter necessarius subsp. necessarius (strain STIR1).